The chain runs to 567 residues: Pyruvate decarboxylase (567 aa).

2 residues coordinate pyruvate: aspartate 28 and histidine 117. Thiamine diphosphate-binding positions include threonine 393 and 416–418 (GSI). Aspartate 447 lines the Mg(2+) pocket. Thiamine diphosphate is bound by residues 448-449 (GS) and 475-480 (NDGYTI). Positions 475 and 477 each coordinate Mg(2+). Position 481 (glutamate 481) interacts with pyruvate.

It belongs to the TPP enzyme family. As to quaternary structure, homotetramer. Mg(2+) is required as a cofactor. The cofactor is thiamine diphosphate.

The protein resides in the cytoplasm. The catalysed reaction is a 2-oxocarboxylate + H(+) = an aldehyde + CO2. The enzyme catalyses pyruvate + H(+) = acetaldehyde + CO2. The protein is Pyruvate decarboxylase (PDC11) of Candida albicans (strain SC5314 / ATCC MYA-2876) (Yeast).